Consider the following 72-residue polypeptide: MSKSDIIEMQGTVLEALPNAMFEVELESGHKILAHISGKLRMNFIRILPGDKVTVELSPYDLTRGRITWRAK.

Residues 1–72 (MSKSDIIEMQ…TRGRITWRAK (72 aa)) form the S1-like domain.

This sequence belongs to the IF-1 family. As to quaternary structure, component of the 30S ribosomal translation pre-initiation complex which assembles on the 30S ribosome in the order IF-2 and IF-3, IF-1 and N-formylmethionyl-tRNA(fMet); mRNA recruitment can occur at any time during PIC assembly.

Its subcellular location is the cytoplasm. In terms of biological role, one of the essential components for the initiation of protein synthesis. Stabilizes the binding of IF-2 and IF-3 on the 30S subunit to which N-formylmethionyl-tRNA(fMet) subsequently binds. Helps modulate mRNA selection, yielding the 30S pre-initiation complex (PIC). Upon addition of the 50S ribosomal subunit IF-1, IF-2 and IF-3 are released leaving the mature 70S translation initiation complex. The polypeptide is Translation initiation factor IF-1 (Clostridium perfringens (strain 13 / Type A)).